A 470-amino-acid chain; its full sequence is Argininosuccinate lyase (470 aa).

Belongs to the lyase 1 family. Argininosuccinate lyase subfamily.

Its subcellular location is the cytoplasm. The enzyme catalyses 2-(N(omega)-L-arginino)succinate = fumarate + L-arginine. It participates in amino-acid biosynthesis; L-arginine biosynthesis; L-arginine from L-ornithine and carbamoyl phosphate: step 3/3. The sequence is that of Argininosuccinate lyase from Cupriavidus pinatubonensis (strain JMP 134 / LMG 1197) (Cupriavidus necator (strain JMP 134)).